We begin with the raw amino-acid sequence, 438 residues long: Probable tRNA pseudouridine synthase D (438 aa).

The active-site Nucleophile is Asp86. Residues 165-390 form the TRUD domain; the sequence is GVPNFFGIQR…SKGTRRELLL (226 aa).

This sequence belongs to the pseudouridine synthase TruD family.

It carries out the reaction uridine(13) in tRNA = pseudouridine(13) in tRNA. Functionally, could be responsible for synthesis of pseudouridine from uracil-13 in transfer RNAs. The chain is Probable tRNA pseudouridine synthase D from Methanosarcina barkeri (strain Fusaro / DSM 804).